We begin with the raw amino-acid sequence, 1060 residues long: RNA-binding protein 27 (1060 aa).

2 stretches are compositionally biased toward basic and acidic residues: residues L91 to V102 and T124 to W143. 2 disordered regions span residues L91 to W143 and W162 to S235. Positions G165–G185 are enriched in basic residues. The segment covering R186–L211 has biased composition (basic and acidic residues). The segment covering S225–S235 has biased composition (polar residues). The C3H1-type zinc finger occupies L273 to D301. 2 stretches are compositionally biased toward pro residues: residues P319–G356 and Q371–P384. The disordered stretch occupies residues P319–L412. Polar residues predominate over residues T386–V402. Position 447 is a phosphothreonine (T447). Position 455 is an omega-N-methylarginine (R455). The tract at residues M565–L592 is disordered. The span at G579–K588 shows a compositional bias: low complexity. In terms of domain architecture, RRM spans T600 to E674. Residues V809–V886 are a coiled coil. Residue S927 is modified to Phosphoserine. Disordered stretches follow at residues P940 to H968 and D1006 to R1060. Phosphoserine occurs at positions 1012 and 1020. Acidic residues predominate over residues E1024 to Y1053.

The protein localises to the cytoplasm. It localises to the nucleus speckle. In terms of biological role, may be involved in the turnover of nuclear polyadenylated (pA+) RNA. The polypeptide is RNA-binding protein 27 (Homo sapiens (Human)).